Consider the following 300-residue polypeptide: 4-hydroxy-tetrahydrodipicolinate synthase (300 aa).

A pyruvate-binding site is contributed by T46. Residue Y134 is the Proton donor/acceptor of the active site. K162 functions as the Schiff-base intermediate with substrate in the catalytic mechanism. Residue I207 participates in pyruvate binding.

This sequence belongs to the DapA family. Homotetramer; dimer of dimers.

It localises to the cytoplasm. The enzyme catalyses L-aspartate 4-semialdehyde + pyruvate = (2S,4S)-4-hydroxy-2,3,4,5-tetrahydrodipicolinate + H2O + H(+). It functions in the pathway amino-acid biosynthesis; L-lysine biosynthesis via DAP pathway; (S)-tetrahydrodipicolinate from L-aspartate: step 3/4. Functionally, catalyzes the condensation of (S)-aspartate-beta-semialdehyde [(S)-ASA] and pyruvate to 4-hydroxy-tetrahydrodipicolinate (HTPA). The sequence is that of 4-hydroxy-tetrahydrodipicolinate synthase from Protochlamydia amoebophila (strain UWE25).